The sequence spans 431 residues: O-methyltransferase gliM (431 aa).

Residues 20-85 (EFKAIVNDLR…SMDKLQLQLV (66 aa)) adopt a coiled-coil conformation. S-adenosyl-L-methionine-binding positions include Asp287 and 319–321 (GDF). The active-site Proton acceptor is the His338.

It belongs to the class I-like SAM-binding methyltransferase superfamily. Cation-independent O-methyltransferase family. COMT subfamily.

The protein operates within mycotoxin biosynthesis. O-methyltransferase; part of the gene cluster that mediates the biosynthesis of gliotoxin, a member of the epipolythiodioxopiperazine (ETP) class of toxins characterized by a disulfide bridged cyclic dipeptide. The first step in gliotoxin biosynthesis is the condensation of serine and phenylalanine to form the cyclo-L-phenylalanyl-L-serine diketopiperazine (DKP) by the NRPS gliP. GliP is also able to produce the DKP cyclo-L-tryptophanyl-L-serine, suggesting that the substrate specificity of the first adenylation (A) domain in gliP is sufficiently relaxed to accommodate both L-Phe and L-Trp. The cytochrome P450 monooxygenase gliC has been shown to catalyze the subsequent hydroxylation of the alpha-carbon of L-Phe in cyclo-L-phenylalanyl-L-serine whereas the second cytochrome P450 enzyme, gliF, is presumably involved in the modification of the DKP side chain. The glutathione S-transferase (GST) gliG then forms a bis-glutathionylated biosynthetic intermediate which is responsible for the sulfurization of gliotoxin. This bis-glutathionylated intermediate is subsequently processed by the gamma-glutamyl cyclotransferase gliK to remove both gamma-glutamyl moieties. Subsequent processing via gliI yields a biosynthetic intermediate, which is N-methylated via the N-methyltransferase gliN, before the gliotoxin oxidoreductase gliT-mediated disulfide bridge closure. GliN-mediated amide methylation confers stability to ETP, damping the spontaneous formation of tri- and tetrasulfides. Intracellular dithiol gliotoxin oxidized by gliT is subsequently effluxed by gliA. Gliotoxin contributes to pathogenesis during invasive aspergillosis. In macrophages and neutrophils, gliotoxin showed inhibition of various different cell functions including cytokine production, antigen presentation, phagocytosis, and production of reactive oxygen species. The polypeptide is O-methyltransferase gliM (Aspergillus fumigatus (strain ATCC MYA-4609 / CBS 101355 / FGSC A1100 / Af293) (Neosartorya fumigata)).